The following is a 235-amino-acid chain: 2,3,4,5-tetrahydropyridine-2,6-dicarboxylate N-acetyltransferase (235 aa).

This sequence belongs to the transferase hexapeptide repeat family. DapH subfamily.

It catalyses the reaction (S)-2,3,4,5-tetrahydrodipicolinate + acetyl-CoA + H2O = L-2-acetamido-6-oxoheptanedioate + CoA. Its pathway is amino-acid biosynthesis; L-lysine biosynthesis via DAP pathway; LL-2,6-diaminopimelate from (S)-tetrahydrodipicolinate (acetylase route): step 1/3. Catalyzes the transfer of an acetyl group from acetyl-CoA to tetrahydrodipicolinate. The protein is 2,3,4,5-tetrahydropyridine-2,6-dicarboxylate N-acetyltransferase of Exiguobacterium sp. (strain ATCC BAA-1283 / AT1b).